Consider the following 334-residue polypeptide: MADAGIPDEILYSDISDDEIIIDGDGDSSGDEDDDDGGLTRQAAARIVTDLGFEVLQPLQSGSEGRVFVARRPGEADTVVLKVGQKPSTLMEGMLLQRLSHDNVMRMKQMLARGPATCLVLPHFRCDLYSYLTMRDGPLDMRDAGCVIRAVLRGLAYLHGMRIMHRDVKAENIFLEDVDTVCLGDLGAARCNVAAPNFYGLAGTIETNAPEVLARDRYDTKVDVWGAGVVLFETLAYPKTITGGDEPAINGEMHLIDLIRALGVHPEEFPPDTRLRSEFVRYAGTHRQPYTQYARVARLGLPETGAFLIYKMLTFDPVRRPSADEILNFGMWTV.

Positions 53–333 constitute a Protein kinase domain; the sequence is FEVLQPLQSG…DEILNFGMWT (281 aa). Residues 59–67 and Lys-82 each bind ATP; that span reads LQSGSEGRV. Catalysis depends on Asp-167, which acts as the Proton acceptor.

It belongs to the protein kinase superfamily. Ser/Thr protein kinase family.

It carries out the reaction L-seryl-[protein] + ATP = O-phospho-L-seryl-[protein] + ADP + H(+). The catalysed reaction is L-threonyl-[protein] + ATP = O-phospho-L-threonyl-[protein] + ADP + H(+). Functionally, able to phosphorylate in vitro the major virion phosphoprotein phosphorylated in vivo. The sequence is that of Serine/threonine-protein kinase (PK) from Sus scrofa (Pig).